Here is a 469-residue protein sequence, read N- to C-terminus: Glutamate--tRNA ligase (469 aa).

The 'HIGH' region motif lies at 11–21 (PSPTGFIHLGN). The short motif at 243–247 (KMSKR) is the 'KMSKS' region element. K246 provides a ligand contact to ATP.

This sequence belongs to the class-I aminoacyl-tRNA synthetase family. Glutamate--tRNA ligase type 1 subfamily. As to quaternary structure, monomer.

It localises to the cytoplasm. It catalyses the reaction tRNA(Glu) + L-glutamate + ATP = L-glutamyl-tRNA(Glu) + AMP + diphosphate. Catalyzes the attachment of glutamate to tRNA(Glu) in a two-step reaction: glutamate is first activated by ATP to form Glu-AMP and then transferred to the acceptor end of tRNA(Glu). This chain is Glutamate--tRNA ligase, found in Burkholderia lata (strain ATCC 17760 / DSM 23089 / LMG 22485 / NCIMB 9086 / R18194 / 383).